The primary structure comprises 178 residues: Large ribosomal subunit protein uL10 (178 aa).

It belongs to the universal ribosomal protein uL10 family. Part of the ribosomal stalk of the 50S ribosomal subunit. The N-terminus interacts with L11 and the large rRNA to form the base of the stalk. The C-terminus forms an elongated spine to which L12 dimers bind in a sequential fashion forming a multimeric L10(L12)X complex.

Its function is as follows. Forms part of the ribosomal stalk, playing a central role in the interaction of the ribosome with GTP-bound translation factors. The protein is Large ribosomal subunit protein uL10 of Stenotrophomonas maltophilia (strain R551-3).